We begin with the raw amino-acid sequence, 334 residues long: PDZ domain-containing protein MAGIX (334 aa).

Basic and acidic residues-rich tracts occupy residues 1–13 (MEPR…DPRG) and 209–224 (LETH…EPRK). 2 disordered regions span residues 1–26 (MEPR…LAGP) and 209–306 (LETH…WLVP). Residues 125–209 (SVELVRGYAG…QLHLVIRRPL (85 aa)) form the PDZ domain. A compositionally biased stretch (polar residues) spans 244-260 (GSRSSSTSLVQHPPSRT). Position 272 is a phosphoserine (S272).

The protein is PDZ domain-containing protein MAGIX (MAGIX) of Homo sapiens (Human).